Consider the following 106-residue polypeptide: Ferredoxin (106 aa).

Cys-9 and Cys-17 together coordinate [3Fe-4S] cluster. [4Fe-4S] cluster is bound by residues Cys-21, Cys-40, Cys-43, and Cys-46. The 4Fe-4S ferredoxin-type domain occupies 31–60 (RMLYIHPDECVDCGACEPVCPVEAIYYEDD). Cys-50 lines the [3Fe-4S] cluster pocket. The disordered stretch occupies residues 84–106 (GAAKVGKVDRDVEPVSSLPPQGE).

It depends on [4Fe-4S] cluster as a cofactor. Requires [3Fe-4S] cluster as cofactor.

Ferredoxins are iron-sulfur proteins that transfer electrons in a wide variety of metabolic reactions. The chain is Ferredoxin (fdxA) from Saccharopolyspora erythraea (Streptomyces erythraeus).